The sequence spans 660 residues: tRNA 5-methylaminomethyl-2-thiouridine biosynthesis bifunctional protein MnmC (660 aa).

Positions 1 to 233 are tRNA (mnm(5)s(2)U34)-methyltransferase; sequence MTHSHAQLVW…KRHISHGWIA (233 aa). The FAD-dependent cmnm(5)s(2)U34 oxidoreductase stretch occupies residues 260–660; the sequence is VGGGLAGAAS…IRRKLDPDAL (401 aa).

In the N-terminal section; belongs to the methyltransferase superfamily. tRNA (mnm(5)s(2)U34)-methyltransferase family. This sequence in the C-terminal section; belongs to the DAO family. The cofactor is FAD.

The protein localises to the cytoplasm. The catalysed reaction is 5-aminomethyl-2-thiouridine(34) in tRNA + S-adenosyl-L-methionine = 5-methylaminomethyl-2-thiouridine(34) in tRNA + S-adenosyl-L-homocysteine + H(+). Functionally, catalyzes the last two steps in the biosynthesis of 5-methylaminomethyl-2-thiouridine (mnm(5)s(2)U) at the wobble position (U34) in tRNA. Catalyzes the FAD-dependent demodification of cmnm(5)s(2)U34 to nm(5)s(2)U34, followed by the transfer of a methyl group from S-adenosyl-L-methionine to nm(5)s(2)U34, to form mnm(5)s(2)U34. The chain is tRNA 5-methylaminomethyl-2-thiouridine biosynthesis bifunctional protein MnmC from Chromobacterium violaceum (strain ATCC 12472 / DSM 30191 / JCM 1249 / CCUG 213 / NBRC 12614 / NCIMB 9131 / NCTC 9757 / MK).